Consider the following 479-residue polypeptide: Poly(A) polymerase catalytic subunit (479 aa).

Active-site residues include Asp-202 and Asp-204. Ca(2+) contacts are provided by Asp-202, Asp-204, and Asp-253.

Belongs to the poxviridae poly(A) polymerase catalytic subunit family. In terms of assembly, heterodimer of a large (catalytic) subunit and a small (regulatory) subunit.

It carries out the reaction RNA(n) + ATP = RNA(n)-3'-adenine ribonucleotide + diphosphate. Functionally, polymerase that creates the 3'-poly(A) tail of mRNA's. The chain is Poly(A) polymerase catalytic subunit (OPG063) from Homo sapiens (Human).